A 91-amino-acid polypeptide reads, in one-letter code: Small ribosomal subunit protein uS15 (91 aa).

The protein belongs to the universal ribosomal protein uS15 family. Part of the 30S ribosomal subunit. Forms a bridge to the 50S subunit in the 70S ribosome, contacting the 23S rRNA.

Its function is as follows. One of the primary rRNA binding proteins, it binds directly to 16S rRNA where it helps nucleate assembly of the platform of the 30S subunit by binding and bridging several RNA helices of the 16S rRNA. Functionally, forms an intersubunit bridge (bridge B4) with the 23S rRNA of the 50S subunit in the ribosome. This chain is Small ribosomal subunit protein uS15, found in Legionella pneumophila (strain Corby).